A 188-amino-acid polypeptide reads, in one-letter code: MSAALNDLLADLTRRMDGAIESLRRDLSGLRSGRASPNLLEPVRVEAYGSEVPLSQVGSIAVPEARMLTVSVWDRTVVGAVERAIRDSGLGLNPSTDGQTVRVPIPALTEERRNELARAASRYAENGKISVRGVRRDGMEQTKALEKKSEISQDDMKTWTDAIQKLTDQYIKKVDDIFADKEREIKQV.

Belongs to the RRF family.

The protein localises to the cytoplasm. Responsible for the release of ribosomes from messenger RNA at the termination of protein biosynthesis. May increase the efficiency of translation by recycling ribosomes from one round of translation to another. In Gluconobacter oxydans (strain 621H) (Gluconobacter suboxydans), this protein is Ribosome-recycling factor.